Here is a 433-residue protein sequence, read N- to C-terminus: 3-phosphoshikimate 1-carboxyvinyltransferase (433 aa).

3 residues coordinate 3-phosphoshikimate: K20, S21, and R25. Residue K20 coordinates phosphoenolpyruvate. Phosphoenolpyruvate is bound by residues G92 and R121. 3-phosphoshikimate-binding residues include S167, S168, Q169, S195, D315, and K342. Q169 contributes to the phosphoenolpyruvate binding site. D315 serves as the catalytic Proton acceptor. Residues R346 and R388 each contribute to the phosphoenolpyruvate site.

This sequence belongs to the EPSP synthase family. As to quaternary structure, monomer.

It localises to the cytoplasm. It carries out the reaction 3-phosphoshikimate + phosphoenolpyruvate = 5-O-(1-carboxyvinyl)-3-phosphoshikimate + phosphate. It participates in metabolic intermediate biosynthesis; chorismate biosynthesis. Catalyzes the transfer of the enolpyruvyl moiety of phosphoenolpyruvate (PEP) to the 5-hydroxyl of shikimate-3-phosphate (S3P) to produce enolpyruvyl shikimate-3-phosphate and inorganic phosphate. This chain is 3-phosphoshikimate 1-carboxyvinyltransferase, found in Methanococcus aeolicus (strain ATCC BAA-1280 / DSM 17508 / OCM 812 / Nankai-3).